The sequence spans 289 residues: MDSSMSTKKKTKLSVRNQTCFKKSSLSSSSTAKKTTNLSMREQTMFKKALELSTLCNIDVCVIYYGRDGKLIKTWPDDQSKVRDMAERFSRLHERERCKKRTNLSLFLRKKILDDTKLSEKVLEMEDSLESGLRVLQDKLLLLQPEKNQTEFGQTRAVSSTTNPLSPPPSLIEDHRHQQRTEPLMSGVSNTEQDLSTSSLSQNQSKFSVFLYNHDNCSFYQVPDSVSSFDSLTSTGLLGEQGSGLGSSFDLPMVFPPQMQTQTPLVPFDQFAPWNQAPSFADPMMFPYN.

In terms of domain architecture, MADS-box spans 18–78; the sequence is QTCFKKSSLS…GKLIKTWPDD (61 aa). A disordered region spans residues 151–197; that stretch reads EFGQTRAVSSTTNPLSPPPSLIEDHRHQQRTEPLMSGVSNTEQDLST. A compositionally biased stretch (polar residues) spans 187 to 197; the sequence is GVSNTEQDLST.

Expressed in pollen.

The protein localises to the nucleus. In terms of biological role, probable transcription factor. The chain is Agamous-like MADS-box protein AGL93 from Arabidopsis thaliana (Mouse-ear cress).